Consider the following 61-residue polypeptide: Small ribosomal subunit protein uS14 (61 aa).

Residues Cys24, Cys27, Cys40, and Cys43 each coordinate Zn(2+).

This sequence belongs to the universal ribosomal protein uS14 family. Zinc-binding uS14 subfamily. As to quaternary structure, part of the 30S ribosomal subunit. Contacts proteins S3 and S10. Zn(2+) is required as a cofactor.

In terms of biological role, binds 16S rRNA, required for the assembly of 30S particles and may also be responsible for determining the conformation of the 16S rRNA at the A site. In Mycobacterium leprae (strain Br4923), this protein is Small ribosomal subunit protein uS14.